The sequence spans 236 residues: Phosphoribosylaminoimidazole-succinocarboxamide synthase (236 aa).

This sequence belongs to the SAICAR synthetase family.

It catalyses the reaction 5-amino-1-(5-phospho-D-ribosyl)imidazole-4-carboxylate + L-aspartate + ATP = (2S)-2-[5-amino-1-(5-phospho-beta-D-ribosyl)imidazole-4-carboxamido]succinate + ADP + phosphate + 2 H(+). It functions in the pathway purine metabolism; IMP biosynthesis via de novo pathway; 5-amino-1-(5-phospho-D-ribosyl)imidazole-4-carboxamide from 5-amino-1-(5-phospho-D-ribosyl)imidazole-4-carboxylate: step 1/2. The sequence is that of Phosphoribosylaminoimidazole-succinocarboxamide synthase from Rickettsia typhi (strain ATCC VR-144 / Wilmington).